Reading from the N-terminus, the 157-residue chain is Snaclec 3 (157 aa).

The N-terminal stretch at 1-23 (MGRLIFLSFGWLVVFLSLSGTGA) is a signal peptide. Disulfide bonds link C27–C38, C55–C153, and C128–C145. A C-type lectin domain is found at 34–154 (YGQHCYRAFS…CAGHYPFICK (121 aa)).

This sequence belongs to the snaclec family. Heterodimer; disulfide-linked. Expressed by the venom gland.

It localises to the secreted. Interferes with one step of hemostasis (modulation of platelet aggregation, or coagulation cascade, for example). The chain is Snaclec 3 from Bitis gabonica (Gaboon adder).